Reading from the N-terminus, the 382-residue chain is GTPase Obg (382 aa).

The region spanning 2-161 is the Obg domain; sequence VKFADESKIR…REIIVELNII (160 aa). In terms of domain architecture, OBG-type G spans 162 to 328; sequence ADIGLVGFPN…VKKAFIRLAD (167 aa). Residues 168–175, 193–197, 215–218, 282–285, and 309–311 each bind GTP; these read GFPNAGKS, FTTKI, DIPG, TKLD, and SLY. Residues Ser175 and Thr195 each contribute to the Mg(2+) site. Positions 360–382 are disordered; that stretch reads EEKNDDEHFGATVSLSRKRKPKK.

The protein belongs to the TRAFAC class OBG-HflX-like GTPase superfamily. OBG GTPase family. In terms of assembly, monomer. Mg(2+) serves as cofactor.

The protein localises to the cytoplasm. An essential GTPase which binds GTP, GDP and possibly (p)ppGpp with moderate affinity, with high nucleotide exchange rates and a fairly low GTP hydrolysis rate. Plays a role in control of the cell cycle, stress response, ribosome biogenesis and in those bacteria that undergo differentiation, in morphogenesis control. The polypeptide is GTPase Obg (Treponema denticola (strain ATCC 35405 / DSM 14222 / CIP 103919 / JCM 8153 / KCTC 15104)).